We begin with the raw amino-acid sequence, 207 residues long: Protein lin-7 homolog B (207 aa).

The Kinase interacting site motif lies at 1-13 (MAALVEPLGLERD). Residues 10–65 (LERDVSRAVELLERLQRSGELPPQKLQALQRVLQSRFCSAIREVYEQLYDTLDITG) enclose the L27 domain. The PDZ domain maps to 93–175 (VVELPKTDEG…SVKLVVRYTP (83 aa)). Positions 187 to 207 (KMRSARRRQQHHSYSSLESRG) are disordered. Residues 198–207 (HSYSSLESRG) are compositionally biased toward polar residues.

It belongs to the lin-7 family. Forms two exclusive ternary complexes with CASK and CASKIN1. The brain-specific heterotrimeric complex (LIN-10-LIN-2-LIN-7 complex) composed of at least APBA1, CASK, and LIN7, associates with the motor protein KIF17 to transport vesicles along microtubules. Forms a heterotrimeric complex composed of MMP5, LIN7B and PATJ; the N-terminal L27 domain of PALS1 interacts with the L27 domain of PATJ and the C-terminal L27 domain of PALS1 interacts with the L27 domain of LIN7B. Forms a heterotrimeric complex with DLG1 and CASK via their L27 domains. Interacts with DLG4 and GRIN2B as well as CDH1 and CTNNB1, the channels KCNJ12/Kir2.2, KCNJ4/Kir2.3 and probably KCNJ2/Kir2.1 and SLC6A12/BGT-1 via its PDZ domain. The association of LIN7A with cadherin and beta-catenin is calcium-dependent, occurs at synaptic junctions and requires the actin cytoskeleton. Interacts with EGFR, ERBB2, ERBB3 and ERBB4 with both PDZ and KID domains. Associates with KIF17 via APBA1. Interacts with ASIC3. Interacts with TOPK. Interacts with RTKN. Interacts with APBA1. Interacts with MPP7. Interacts with DLG2. Interacts with DLG3. In terms of tissue distribution, expressed only in brain.

It is found in the cell membrane. The protein resides in the basolateral cell membrane. The protein localises to the cell junction. Its subcellular location is the postsynaptic density membrane. It localises to the tight junction. Functionally, plays a role in establishing and maintaining the asymmetric distribution of channels and receptors at the plasma membrane of polarized cells. Forms membrane-associated multiprotein complexes that may regulate delivery and recycling of proteins to the correct membrane domains. The tripartite complex composed of LIN7 (LIN7A, LIN7B or LIN7C), CASK and APBA1 associates with the motor protein KIF17 to transport vesicles containing N-methyl-D-aspartate (NMDA) receptor subunit NR2B along microtubules. This complex may have the potential to couple synaptic vesicle exocytosis to cell adhesion in brain. Ensures the proper localization of GRIN2B (subunit 2B of the NMDA receptor) to neuronal postsynaptic density and may function in localizing synaptic vesicles at synapses where it is recruited by beta-catenin and cadherin. Required to localize Kir2 channels, GABA transporter (SLC6A12) and EGFR/ERBB1, ERBB2, ERBB3 and ERBB4 to the basolateral membrane of epithelial cells. May increase the amplitude of ASIC3 acid-evoked currents by stabilizing the channel at the cell surface. The polypeptide is Protein lin-7 homolog B (Lin7b) (Rattus norvegicus (Rat)).